We begin with the raw amino-acid sequence, 88 residues long: Small ribosomal subunit protein uS17 (88 aa).

Belongs to the universal ribosomal protein uS17 family. In terms of assembly, part of the 30S ribosomal subunit.

In terms of biological role, one of the primary rRNA binding proteins, it binds specifically to the 5'-end of 16S ribosomal RNA. This is Small ribosomal subunit protein uS17 from Lactobacillus acidophilus (strain ATCC 700396 / NCK56 / N2 / NCFM).